The sequence spans 288 residues: Killer cell lectin-like receptor 2 (288 aa).

Over 1-45 (MSEQEVTYTTLRFHKSSGLQNPVRPEETQRPRDVGHRECSVPWKF) the chain is Cytoplasmic. The chain crosses the membrane as a helical; Signal-anchor for type II membrane protein span at residues 46 to 66 (IVIVLGILCFLLLLTVAVLVI). Residues 67–288 (HIFRDGQEKH…SALQRDEDES (222 aa)) lie on the Extracellular side of the membrane. 3 N-linked (GlcNAc...) asparagine glycosylation sites follow: asparagine 94, asparagine 105, and asparagine 114. The 120-residue stretch at 144 to 263 (QVEGYWFCCG…THGCICEKRL (120 aa)) folds into the C-type lectin domain. Cystine bridges form between cysteine 151–cysteine 156, cysteine 169–cysteine 257, cysteine 173–cysteine 259, and cysteine 238–cysteine 251. A glycan (N-linked (GlcNAc...) asparagine) is linked at asparagine 177.

In terms of assembly, homodimer; disulfide-linked.

The protein localises to the membrane. In terms of biological role, receptor on natural killer (NK) cells for class I MHC. This Mus musculus (Mouse) protein is Killer cell lectin-like receptor 2 (Klra2).